Consider the following 96-residue polypeptide: Small ribosomal subunit protein bS6 (96 aa).

This sequence belongs to the bacterial ribosomal protein bS6 family.

Functionally, binds together with bS18 to 16S ribosomal RNA. The polypeptide is Small ribosomal subunit protein bS6 (Gloeobacter violaceus (strain ATCC 29082 / PCC 7421)).